The sequence spans 1022 residues: Antigenic heat-stable 120 kDa protein (1022 aa).

Disordered stretches follow at residues 1 to 41 (MSKD…QTTT) and 355 to 403 (GQSK…PQSQ). Residues 19–34 (EYTEEQKQTLEQEQKE) are compositionally biased toward basic and acidic residues. 2 stretches are compositionally biased toward polar residues: residues 355–380 (GQSK…QYKQ) and 387–403 (PTNQ…PQSQ).

It localises to the cytoplasm. The polypeptide is Antigenic heat-stable 120 kDa protein (sca4) (Rickettsia conorii (strain ATCC VR-613 / Malish 7)).